Here is an 886-residue protein sequence, read N- to C-terminus: Isoleucine--tRNA ligase (886 aa).

Residues 60–70 (PYANGDIHIGH) carry the 'HIGH' region motif. Glutamate 546 is a binding site for L-isoleucyl-5'-AMP. A 'KMSKS' region motif is present at residues 587–591 (KMSKS). Residue lysine 590 participates in ATP binding. Residues cysteine 856, cysteine 859, cysteine 870, and cysteine 873 each coordinate Zn(2+).

It belongs to the class-I aminoacyl-tRNA synthetase family. IleS type 1 subfamily. As to quaternary structure, monomer. Zn(2+) serves as cofactor.

The protein resides in the cytoplasm. It catalyses the reaction tRNA(Ile) + L-isoleucine + ATP = L-isoleucyl-tRNA(Ile) + AMP + diphosphate. Functionally, catalyzes the attachment of isoleucine to tRNA(Ile). As IleRS can inadvertently accommodate and process structurally similar amino acids such as valine, to avoid such errors it has two additional distinct tRNA(Ile)-dependent editing activities. One activity is designated as 'pretransfer' editing and involves the hydrolysis of activated Val-AMP. The other activity is designated 'posttransfer' editing and involves deacylation of mischarged Val-tRNA(Ile). This is Isoleucine--tRNA ligase from Mesomycoplasma hyopneumoniae (strain 232) (Mycoplasma hyopneumoniae).